Reading from the N-terminus, the 876-residue chain is Phosphoenolpyruvate carboxylase (876 aa).

Catalysis depends on residues His-138 and Lys-543.

It belongs to the PEPCase type 1 family. Requires Mg(2+) as cofactor.

It carries out the reaction oxaloacetate + phosphate = phosphoenolpyruvate + hydrogencarbonate. In terms of biological role, forms oxaloacetate, a four-carbon dicarboxylic acid source for the tricarboxylic acid cycle. In Pseudomonas fluorescens (strain Pf0-1), this protein is Phosphoenolpyruvate carboxylase.